The primary structure comprises 793 residues: Phosphoribosylformylglycinamidine synthase subunit PurL (793 aa).

Residue H53 is part of the active site. ATP contacts are provided by Y56 and K95. Position 97 (E97) interacts with Mg(2+). Substrate contacts are provided by residues 98-101 (SHNH) and R120. The active-site Proton acceptor is the H99. D121 serves as a coordination point for Mg(2+). Q244 provides a ligand contact to substrate. D272 contributes to the Mg(2+) binding site. 316–318 (ESQ) contacts substrate. Residues D523 and G560 each coordinate ATP. A Mg(2+)-binding site is contributed by N561. S563 serves as a coordination point for substrate.

This sequence belongs to the FGAMS family. In terms of assembly, monomer. Part of the FGAM synthase complex composed of 1 PurL, 1 PurQ and 2 PurS subunits.

Its subcellular location is the cytoplasm. The enzyme catalyses N(2)-formyl-N(1)-(5-phospho-beta-D-ribosyl)glycinamide + L-glutamine + ATP + H2O = 2-formamido-N(1)-(5-O-phospho-beta-D-ribosyl)acetamidine + L-glutamate + ADP + phosphate + H(+). Its pathway is purine metabolism; IMP biosynthesis via de novo pathway; 5-amino-1-(5-phospho-D-ribosyl)imidazole from N(2)-formyl-N(1)-(5-phospho-D-ribosyl)glycinamide: step 1/2. Its function is as follows. Part of the phosphoribosylformylglycinamidine synthase complex involved in the purines biosynthetic pathway. Catalyzes the ATP-dependent conversion of formylglycinamide ribonucleotide (FGAR) and glutamine to yield formylglycinamidine ribonucleotide (FGAM) and glutamate. The FGAM synthase complex is composed of three subunits. PurQ produces an ammonia molecule by converting glutamine to glutamate. PurL transfers the ammonia molecule to FGAR to form FGAM in an ATP-dependent manner. PurS interacts with PurQ and PurL and is thought to assist in the transfer of the ammonia molecule from PurQ to PurL. This is Phosphoribosylformylglycinamidine synthase subunit PurL from Prochlorococcus marinus (strain SARG / CCMP1375 / SS120).